The chain runs to 331 residues: Holliday junction branch migration complex subunit RuvB (331 aa).

Residues 1-186 (MAKTMMQDRL…FGIVQRLEFY (186 aa)) are large ATPase domain (RuvB-L). ATP is bound by residues isoleucine 25, arginine 26, glycine 67, lysine 70, threonine 71, threonine 72, 133–135 (EDF), arginine 176, tyrosine 186, and arginine 223. Threonine 71 is a binding site for Mg(2+). Residues 187 to 257 (NIADLTTIVS…IAGSALDMLA (71 aa)) are small ATPAse domain (RuvB-S). Residues 260–331 (RRGLDHLDRR…LTQMAIDQML (72 aa)) are head domain (RuvB-H). DNA is bound by residues arginine 296, arginine 315, and arginine 320.

The protein belongs to the RuvB family. As to quaternary structure, homohexamer. Forms an RuvA(8)-RuvB(12)-Holliday junction (HJ) complex. HJ DNA is sandwiched between 2 RuvA tetramers; dsDNA enters through RuvA and exits via RuvB. An RuvB hexamer assembles on each DNA strand where it exits the tetramer. Each RuvB hexamer is contacted by two RuvA subunits (via domain III) on 2 adjacent RuvB subunits; this complex drives branch migration. In the full resolvosome a probable DNA-RuvA(4)-RuvB(12)-RuvC(2) complex forms which resolves the HJ.

It is found in the cytoplasm. It catalyses the reaction ATP + H2O = ADP + phosphate + H(+). Its function is as follows. The RuvA-RuvB-RuvC complex processes Holliday junction (HJ) DNA during genetic recombination and DNA repair, while the RuvA-RuvB complex plays an important role in the rescue of blocked DNA replication forks via replication fork reversal (RFR). RuvA specifically binds to HJ cruciform DNA, conferring on it an open structure. The RuvB hexamer acts as an ATP-dependent pump, pulling dsDNA into and through the RuvAB complex. RuvB forms 2 homohexamers on either side of HJ DNA bound by 1 or 2 RuvA tetramers; 4 subunits per hexamer contact DNA at a time. Coordinated motions by a converter formed by DNA-disengaged RuvB subunits stimulates ATP hydrolysis and nucleotide exchange. Immobilization of the converter enables RuvB to convert the ATP-contained energy into a lever motion, pulling 2 nucleotides of DNA out of the RuvA tetramer per ATP hydrolyzed, thus driving DNA branch migration. The RuvB motors rotate together with the DNA substrate, which together with the progressing nucleotide cycle form the mechanistic basis for DNA recombination by continuous HJ branch migration. Branch migration allows RuvC to scan DNA until it finds its consensus sequence, where it cleaves and resolves cruciform DNA. The protein is Holliday junction branch migration complex subunit RuvB of Psychrobacter cryohalolentis (strain ATCC BAA-1226 / DSM 17306 / VKM B-2378 / K5).